A 162-amino-acid chain; its full sequence is 3-hydroxyacyl-[acyl-carrier-protein] dehydratase FabZ (162 aa).

The active site involves histidine 49.

The protein belongs to the thioester dehydratase family. FabZ subfamily.

The protein localises to the cytoplasm. The enzyme catalyses a (3R)-hydroxyacyl-[ACP] = a (2E)-enoyl-[ACP] + H2O. Involved in unsaturated fatty acids biosynthesis. Catalyzes the dehydration of short chain beta-hydroxyacyl-ACPs and long chain saturated and unsaturated beta-hydroxyacyl-ACPs. In Solibacter usitatus (strain Ellin6076), this protein is 3-hydroxyacyl-[acyl-carrier-protein] dehydratase FabZ.